A 407-amino-acid polypeptide reads, in one-letter code: Serine/threonine transporter SstT (407 aa).

9 consecutive transmembrane segments (helical) span residues 14–34 (GSLV…ATVS), 48–68 (FVGA…AASI), 82–102 (IVIL…LMSF), 141–161 (AVLT…GLAL), 192–212 (IGIF…AIAG), 216–236 (LLLV…PAIV), 290–310 (IPLG…ILTL), 316–336 (MGIQ…GVSA), and 363–383 (VAMQ…SAET).

This sequence belongs to the dicarboxylate/amino acid:cation symporter (DAACS) (TC 2.A.23) family.

It localises to the cell inner membrane. It carries out the reaction L-serine(in) + Na(+)(in) = L-serine(out) + Na(+)(out). The enzyme catalyses L-threonine(in) + Na(+)(in) = L-threonine(out) + Na(+)(out). Its function is as follows. Involved in the import of serine and threonine into the cell, with the concomitant import of sodium (symport system). The sequence is that of Serine/threonine transporter SstT from Shewanella halifaxensis (strain HAW-EB4).